Reading from the N-terminus, the 151-residue chain is UPF0178 protein YaiI (151 aa).

The protein belongs to the UPF0178 family.

The sequence is that of UPF0178 protein YaiI from Salmonella paratyphi C (strain RKS4594).